Here is a 155-residue protein sequence, read N- to C-terminus: uncharacterized protein (155 aa).

In terms of domain architecture, HTH asnC-type spans 4-65; that stretch reads IDEVDEIILR…IIDHSFLGEF (62 aa). A DNA-binding region (H-T-H motif) is located at residues 23 to 42; sequence LTELSRKVGLTPAAIKNRVE.

This is an uncharacterized protein from Pyrococcus furiosus (strain ATCC 43587 / DSM 3638 / JCM 8422 / Vc1).